Here is a 1010-residue protein sequence, read N- to C-terminus: Protein CROWDED NUCLEI 4 (1010 aa).

Coiled coils occupy residues 82-350 (LLLL…LIQN) and 404-763 (EKEH…NLER). 2 consecutive short sequence motifs (nuclear localization signal) follow at residues 445–452 (NRKTTMLE) and 679–686 (LKRLDAER). Disordered regions lie at residues 787–813 (GVST…PSSA), 839–937 (HYEE…TQTP), and 966–994 (DCSE…GINA). Residues 849–863 (EKLKLESSRREEKAY) are compositionally biased toward basic and acidic residues. Polar residues-rich tracts occupy residues 883 to 893 (NTSGDETSEPS) and 912 to 921 (TQSVISSPQN).

The protein belongs to the CRWN family. In terms of assembly, core component of the LINC complex which is composed of inner nuclear membrane SUN domain-containing proteins coupled to outer nuclear membrane WIP proteins, the nucleoskeletal CRWN/LINC proteins, and, possibly, KAKU4. Binds to KAKU4. In terms of tissue distribution, expressed at low levels in roots, leaves, flowers and flower stalks.

The protein resides in the nucleus membrane. Its subcellular location is the nucleus. It localises to the nucleoplasm. The protein localises to the nucleus lamina. It is found in the cytoplasm. In terms of biological role, component of SUN-protein-containing multivariate complexes also called LINC complexes which link the nucleoskeleton and cytoskeleton by providing versatile outer nuclear membrane attachment sites for cytoskeletal filaments. Required for nucleus structure organization (e.g. size and shape). Involved in the maintenance of interphase chromocenter integrity and organization. This Arabidopsis thaliana (Mouse-ear cress) protein is Protein CROWDED NUCLEI 4.